Reading from the N-terminus, the 391-residue chain is Small ribosomal subunit protein bS1 (391 aa).

S1 motif domains are found at residues 16–90, 108–173, 194–262, and 279–348; these read GDKV…LSRR, NEII…LSRK, GDVI…LSIK, and NDVI…LSIK.

This sequence belongs to the bacterial ribosomal protein bS1 family.

Its function is as follows. Binds mRNA; thus facilitating recognition of the initiation point. It is needed to translate mRNA with a short Shine-Dalgarno (SD) purine-rich sequence. The chain is Small ribosomal subunit protein bS1 (rpsA) from Staphylococcus aureus (strain MSSA476).